A 65-amino-acid chain; its full sequence is Toxin Cbo5 (65 aa).

In terms of domain architecture, LCN-type CS-alpha/beta spans 2–65 (KDGYLVDKTG…QTWPLPNKSC (64 aa)). Intrachain disulfides connect C12/C65, C16/C41, C25/C46, and C29/C48.

Belongs to the long (4 C-C) scorpion toxin superfamily. Sodium channel inhibitor family. Beta subfamily. Expressed by the venom gland.

It localises to the secreted. Its function is as follows. A probable toxin that has no activity on the tested sodium channels (when tested at 200 nM) and is not toxic to mice, crickets or sweet water shrimps. It resembles Beta toxins that bind voltage-independently at site-4 of sodium channels and shift the voltage of activation toward more negative potentials, thereby affecting sodium channel activation and promoting spontaneous and repetitive firing. The polypeptide is Toxin Cbo5 (Centruroides bonito (Scorpion)).